A 160-amino-acid chain; its full sequence is MSNQDNERPAKTANQRGAARLAAVQALYQMDIGGTGVLEVVAEYEAHRLGQELDGDTYLKADASWFRSIVSGVVREQTRLDPLIGSALQDDWALSRLDSTVRAILRAGTFEILDRKDVPVAVIVTEYVEIAHAFFDDDEPKLVNAVLDRIAKQVRGEAKK.

Belongs to the NusB family.

In terms of biological role, involved in transcription antitermination. Required for transcription of ribosomal RNA (rRNA) genes. Binds specifically to the boxA antiterminator sequence of the ribosomal RNA (rrn) operons. The sequence is that of Transcription antitermination protein NusB from Rhizobium rhizogenes (strain K84 / ATCC BAA-868) (Agrobacterium radiobacter).